An 87-amino-acid polypeptide reads, in one-letter code: UPF0175 protein AF_0597 (87 aa).

The protein belongs to the UPF0175 family.

In Archaeoglobus fulgidus (strain ATCC 49558 / DSM 4304 / JCM 9628 / NBRC 100126 / VC-16), this protein is UPF0175 protein AF_0597.